We begin with the raw amino-acid sequence, 118 residues long: Probable FK506-binding protein (118 aa).

The region spanning 33–118 (GGEVEVHYVG…LVFIIDLISA (86 aa)) is the PPIase FKBP-type domain.

Belongs to the FKBP-type PPIase family.

It carries out the reaction [protein]-peptidylproline (omega=180) = [protein]-peptidylproline (omega=0). Functionally, PPIases accelerate the folding of proteins. The polypeptide is Probable FK506-binding protein (Corynebacterium glutamicum (strain ATCC 13032 / DSM 20300 / JCM 1318 / BCRC 11384 / CCUG 27702 / LMG 3730 / NBRC 12168 / NCIMB 10025 / NRRL B-2784 / 534)).